The following is an 85-amino-acid chain: Granaticin polyketide synthase acyl carrier protein (85 aa).

In terms of domain architecture, Carrier spans 3-81 (RLTLDGLRTI…VLLDLVNGAQ (79 aa)). Ser41 carries the post-translational modification O-(pantetheine 4'-phosphoryl)serine.

Post-translationally, 4'-phosphopantetheine is transferred from CoA to a specific serine of the apo-ACP-like protein.

Its pathway is antibiotic biosynthesis; granaticin biosynthesis. Its function is as follows. Acyl carrier protein. The polypeptide is Granaticin polyketide synthase acyl carrier protein (Streptomyces violaceoruber).